A 107-amino-acid polypeptide reads, in one-letter code: UPF0145 protein BVU_2335 (107 aa).

Belongs to the UPF0145 family.

In Phocaeicola vulgatus (strain ATCC 8482 / DSM 1447 / JCM 5826 / CCUG 4940 / NBRC 14291 / NCTC 11154) (Bacteroides vulgatus), this protein is UPF0145 protein BVU_2335.